A 193-amino-acid polypeptide reads, in one-letter code: MAFIISIIIAYLLGSLSFAVIVAKLMKLPDPRTTGSGNAGATNMLRVGGRQAAFYVLLGDAAKGLIAVLIARFLNVQGVSLAFVGLVAVLGHLFPVYFKFRGGKGVATMMGVLLGLSFWIALFVIATWVIVVSIFRYSSVAALVSAVAAPIYTIIAGRTDYLFPVLIIAILLIWKHWENFQRLRKGTEDKVKL.

The next 5 membrane-spanning stretches (helical) occupy residues Ala2–Val22, Gln51–Ala71, Gly78–Phe98, Val112–Val132, and Ile154–Trp174.

This sequence belongs to the PlsY family. As to quaternary structure, probably interacts with PlsX.

Its subcellular location is the cell inner membrane. It catalyses the reaction an acyl phosphate + sn-glycerol 3-phosphate = a 1-acyl-sn-glycero-3-phosphate + phosphate. Its pathway is lipid metabolism; phospholipid metabolism. Functionally, catalyzes the transfer of an acyl group from acyl-phosphate (acyl-PO(4)) to glycerol-3-phosphate (G3P) to form lysophosphatidic acid (LPA). This enzyme utilizes acyl-phosphate as fatty acyl donor, but not acyl-CoA or acyl-ACP. The protein is Glycerol-3-phosphate acyltransferase of Coxiella burnetii (strain CbuG_Q212) (Coxiella burnetii (strain Q212)).